The following is a 180-amino-acid chain: Segregation and condensation protein B (180 aa).

Belongs to the ScpB family. In terms of assembly, homodimer. Homodimerization may be required to stabilize the binding of ScpA to the Smc head domains. Component of a cohesin-like complex composed of ScpA, ScpB and the Smc homodimer, in which ScpA and ScpB bind to the head domain of Smc. The presence of the three proteins is required for the association of the complex with DNA.

It is found in the cytoplasm. Its function is as follows. Participates in chromosomal partition during cell division. May act via the formation of a condensin-like complex containing Smc and ScpA that pull DNA away from mid-cell into both cell halves. This Staphylococcus aureus (strain USA300) protein is Segregation and condensation protein B.